The primary structure comprises 110 residues: Insulin (110 aa).

Residues 1 to 23 (MALWLQAFTLLVLLVLSSPGAQS) form the signal peptide. 3 cysteine pairs are disulfide-bonded: cysteine 30–cysteine 96, cysteine 42–cysteine 109, and cysteine 95–cysteine 100. Residues 56–87 (DVDPLLGFLSPKSAQENEADEYPYKDQGDLKV) constitute a propeptide, c peptide.

The protein belongs to the insulin family. Heterodimer of a B chain and an A chain linked by two disulfide bonds.

The protein resides in the secreted. Functionally, insulin decreases blood glucose concentration. It increases cell permeability to monosaccharides, amino acids and fatty acids. It accelerates glycolysis, the pentose phosphate cycle, and glycogen synthesis in liver. The polypeptide is Insulin (ins) (Pantodon buchholzi (Freshwater butterflyfish)).